The chain runs to 383 residues: Lipid-A-disaccharide synthase (383 aa).

This sequence belongs to the LpxB family.

The enzyme catalyses 2-N,3-O-bis[(3R)-3-hydroxytetradecanoyl]-alpha-D-glucosaminyl 1-phosphate + UDP-2-N,3-O-bis[(3R)-3-hydroxytetradecanoyl]-alpha-D-glucosamine = lipid A disaccharide (E. coli) + UDP + H(+). It carries out the reaction a lipid X + a UDP-2-N,3-O-bis[(3R)-3-hydroxyacyl]-alpha-D-glucosamine = a lipid A disaccharide + UDP + H(+). Its pathway is glycolipid biosynthesis; lipid IV(A) biosynthesis; lipid IV(A) from (3R)-3-hydroxytetradecanoyl-[acyl-carrier-protein] and UDP-N-acetyl-alpha-D-glucosamine: step 5/6. In terms of biological role, condensation of UDP-2,3-diacylglucosamine and 2,3-diacylglucosamine-1-phosphate to form lipid A disaccharide, a precursor of lipid A, a phosphorylated glycolipid that anchors the lipopolysaccharide to the outer membrane of the cell. The protein is Lipid-A-disaccharide synthase of Klebsiella pneumoniae (strain 342).